A 363-amino-acid polypeptide reads, in one-letter code: Sorting nexin-21 (363 aa).

The span at 1–11 shows a compositional bias: basic residues; sequence MASRLLHRLRH. The interval 1-99 is disordered; the sequence is MASRLLHRLR…PPPDGQRSSQ (99 aa). The span at 12–28 shows a compositional bias: low complexity; it reads ALASDGPGEAAAGPEAE. Polar residues predominate over residues 46 to 56; it reads SRLSGTLSFTS. The segment covering 57-71 has biased composition (acidic residues); sequence AEDDPDDEDEDDEAG. The PX domain occupies 119-236; sequence QRLLFEVTSA…DFFVLPELRR (118 aa). The a 1,2-diacyl-sn-glycero-3-phospho-(1D-myo-inositol-3-phosphate) site is built by Arg-161, Ser-163, Lys-188, and Arg-202.

It belongs to the sorting nexin family. Monomer.

The protein localises to the cytoplasmic vesicle membrane. The protein resides in the early endosome membrane. In terms of biological role, binds to membranes enriched in phosphatidylinositol 3-phosphate (PtdIns(P3)) and phosphatidylinositol 4,5-bisphosphate. May be involved in several stages of intracellular trafficking. The sequence is that of Sorting nexin-21 from Mus musculus (Mouse).